Consider the following 357-residue polypeptide: Pheromone receptor 1 (357 aa).

Transmembrane regions (helical) follow at residues 5 to 25 (ITPF…AWHI), 32 to 52 (LIML…NSMV), 67 to 90 (LSVR…ARKL), 110 to 130 (VIID…LMIV), 145 to 165 (WPMM…VIVV), 206 to 226 (LLLL…GTIA), and 268 to 288 (LILA…MFGL). The segment at 338–357 (ANTSTKSEKSDIDMRGSEAA) is disordered. The span at 343–357 (KSEKSDIDMRGSEAA) shows a compositional bias: basic and acidic residues.

It belongs to the G-protein coupled receptor 4 family.

Its subcellular location is the membrane. Functionally, receptor for the A2 pheromone, a prenylated mating factor. This Mycosarcoma maydis (Corn smut fungus) protein is Pheromone receptor 1 (PRA1).